Here is a 442-residue protein sequence, read N- to C-terminus: D(2) dopamine receptor A (442 aa).

Over 1–31 (MDPQNLSMYNDDINNGTNGTAVDQKPHYNYY) the chain is Extracellular. N-linked (GlcNAc...) asparagine glycosylation is found at N5, N15, and N18. The chain crosses the membrane as a helical span at residues 32–54 (AMLLTLLVFVIVFGNVLVCIAVS). Over 55–64 (REKALQTTTN) the chain is Cytoplasmic. The helical transmembrane segment at 65–87 (YLIVSLAVADLLVATLVMPWAVY) threads the bilayer. The Extracellular segment spans residues 88–102 (MEVVGEWRFSRIHCD). A disulfide bridge connects residues C101 and C176. The chain crosses the membrane as a helical span at residues 103 to 124 (IFVTLDVMMCTASILNLCAISI). Residues 125 to 145 (DRYTAVAMPMLYNTRYSSKRR) are Cytoplasmic-facing. The helical transmembrane segment at 146-166 (VTVMISVVWVLSFAISCPLLF) threads the bilayer. Residues 167–182 (GLNNTGSKVCIIDNPA) are Extracellular-facing. A helical transmembrane segment spans residues 183–207 (FVIYSSIVSFYVPFIVTLLVYVQIY). Topologically, residues 208–372 (IVLRKRRKRV…SQHKEKKATQ (165 aa)) are cytoplasmic. The tract at residues 273-335 (DMEMEMMSST…KNGHPKDSTK (63 aa)) is disordered. A compositionally biased stretch (polar residues) spans 304–318 (ATSNQCKNASLTSPV). Over residues 322-335 (YKAEKNGHPKDSTK) the composition is skewed to basic and acidic residues. A helical membrane pass occupies residues 373–394 (MLAIVLGVFIICWLPFFIIHIL). At 395 to 408 (NMHCNCNIPQALYS) the chain is on the extracellular side. A disulfide bridge connects residues C398 and C400. A helical transmembrane segment spans residues 409–430 (AFTWLGYVNSAVNPIIYTTFNV). The Cytoplasmic segment spans residues 431-442 (EFRKAFIKILHC). The S-palmitoyl cysteine moiety is linked to residue C442.

Belongs to the G-protein coupled receptor 1 family. Post-translationally, palmitoylated. Palmitoylation is probably required for proper localization to the plasma membrane and stability of the receptor. As to expression, brain; pituitary.

It localises to the cell membrane. It is found in the golgi apparatus membrane. In terms of biological role, this is one of the five types (D1 to D5) of receptors for dopamine. The activity of this receptor is mediated by G proteins which inhibits adenylyl cyclase. In Xenopus D2R is involved in the regulation of the melanotrope cells of the intermediate pituitary during background adaptation of the animal. The protein is D(2) dopamine receptor A (drd2-a) of Xenopus laevis (African clawed frog).